A 196-amino-acid polypeptide reads, in one-letter code: Imidazoleglycerol-phosphate dehydratase (196 aa).

It belongs to the imidazoleglycerol-phosphate dehydratase family.

The protein localises to the cytoplasm. The catalysed reaction is D-erythro-1-(imidazol-4-yl)glycerol 3-phosphate = 3-(imidazol-4-yl)-2-oxopropyl phosphate + H2O. It participates in amino-acid biosynthesis; L-histidine biosynthesis; L-histidine from 5-phospho-alpha-D-ribose 1-diphosphate: step 6/9. In Granulibacter bethesdensis (strain ATCC BAA-1260 / CGDNIH1), this protein is Imidazoleglycerol-phosphate dehydratase.